The sequence spans 306 residues: Porphobilinogen deaminase (306 aa).

C239 is modified (S-(dipyrrolylmethanemethyl)cysteine).

Belongs to the HMBS family. Monomer. Dipyrromethane is required as a cofactor.

The catalysed reaction is 4 porphobilinogen + H2O = hydroxymethylbilane + 4 NH4(+). The protein operates within porphyrin-containing compound metabolism; protoporphyrin-IX biosynthesis; coproporphyrinogen-III from 5-aminolevulinate: step 2/4. Tetrapolymerization of the monopyrrole PBG into the hydroxymethylbilane pre-uroporphyrinogen in several discrete steps. This Helicobacter pylori (strain J99 / ATCC 700824) (Campylobacter pylori J99) protein is Porphobilinogen deaminase (hemC).